The sequence spans 129 residues: Glycine cleavage system H protein (129 aa).

Positions 24–106 (IAVIGITAYA…YGDGWLIKVR (83 aa)) constitute a Lipoyl-binding domain. Lys-65 is subject to N6-lipoyllysine.

This sequence belongs to the GcvH family. In terms of assembly, the glycine cleavage system is composed of four proteins: P, T, L and H. Requires (R)-lipoate as cofactor.

Functionally, the glycine cleavage system catalyzes the degradation of glycine. The H protein shuttles the methylamine group of glycine from the P protein to the T protein. The chain is Glycine cleavage system H protein from Synechococcus sp. (strain JA-3-3Ab) (Cyanobacteria bacterium Yellowstone A-Prime).